A 377-amino-acid chain; its full sequence is DNA dC-&gt;dU-editing enzyme APOBEC-3G (377 aa).

The essential for cytoplasmic localization stretch occupies residues Met1–Pro60. 2 consecutive CMP/dCMP-type deaminase domains span residues Gly29–Leu138 and Gly214–Leu327. Thr32 carries the phosphothreonine; by PKA modification. 3 residues coordinate Zn(2+): His65, Cys97, and Cys100. The necessary for homooligomerization stretch occupies residues Lys209–Ala335. Positions Ser213–Gln215 are interaction with DNA. Phosphothreonine; by PKA and CAMK2 is present on Thr218. Zn(2+) is bound at residue His257. The active-site Proton donor is the Glu259. Residues Cys287 and Cys290 each contribute to the Zn(2+) site. An interaction with DNA region spans residues Arg312–Arg319.

It belongs to the cytidine and deoxycytidylate deaminase family. As to quaternary structure, homodimer. Homooligomer. Can bind RNA to form ribonucleoprotein complexes of high-molecular-mass (HMM) or low-molecular-mass (LMM). HMM is inactive and heterogeneous in protein composition because of binding nonselectively to cellular RNAs, which in turn are associated with variety of cellular proteins. The LMM form which is enzymatically active has few or no RNAs associated. Its ability to form homooligomer is distinct from its ability to assemble into HMM. Interacts with APOBEC3B, APOBEC3F, MOV10, AGO2, EIF4E, EIF4ENIF1, DCP2 and DDX6 in an RNA-dependent manner. Interacts with AGO1, AGO3 and PKA/PRKACA. It depends on Zn(2+) as a cofactor.

Its subcellular location is the cytoplasm. It localises to the nucleus. It is found in the P-body. The enzyme catalyses a 2'-deoxycytidine in single-stranded DNA + H2O + H(+) = a 2'-deoxyuridine in single-stranded DNA + NH4(+). In terms of biological role, DNA deaminase (cytidine deaminase) which acts as an inhibitor of retrovirus replication and retrotransposon mobility via deaminase-dependent and -independent mechanisms. Exhibits antiviral activity against vif-deficient: HIV-1 and simian immunodeficiency viruses (SIVs) and also simian foamy virus (SFV). After the penetration of retroviral nucleocapsids into target cells of infection and the initiation of reverse transcription, it can induce the conversion of cytosine to uracil in the minus-sense single-strand viral DNA, leading to G-to-A hypermutations in the subsequent plus-strand viral DNA. The resultant detrimental levels of mutations in the proviral genome, along with a deamination-independent mechanism that works prior to the proviral integration, together exert efficient antiretroviral effects in infected target cells. Selectively targets single-stranded DNA and does not deaminate double-stranded DNA or single- or double-stranded RNA. May inhibit the mobility of LTR retrotransposons. In Chlorocebus aethiops (Green monkey), this protein is DNA dC-&gt;dU-editing enzyme APOBEC-3G (APOBEC3G).